We begin with the raw amino-acid sequence, 1486 residues long: Chromosome partition protein MukB (1486 aa).

34–41 (GGNGAGKS) serves as a coordination point for ATP. 3 coiled-coil regions span residues 326–418 (LEAD…QYNQ), 444–480 (LETF…QAYQ), and 509–603 (RHLA…RAPV). The tract at residues 666–783 (PGGSEDQRLN…EVPLFGRAAR (118 aa)) is flexible hinge. Coiled-coil stretches lie at residues 835–923 (EAEI…AKLE), 977–1115 (EMLS…TAKA), and 1209–1266 (VEAI…QNVS).

This sequence belongs to the SMC family. MukB subfamily. In terms of assembly, homodimerization via its hinge domain. Binds to DNA via its C-terminal region. Interacts, and probably forms a ternary complex, with MukE and MukF via its C-terminal region. The complex formation is stimulated by calcium or magnesium. Interacts with tubulin-related protein FtsZ.

It is found in the cytoplasm. The protein localises to the nucleoid. In terms of biological role, plays a central role in chromosome condensation, segregation and cell cycle progression. Functions as a homodimer, which is essential for chromosome partition. Involved in negative DNA supercoiling in vivo, and by this means organize and compact chromosomes. May achieve or facilitate chromosome segregation by condensation DNA from both sides of a centrally located replisome during cell division. The protein is Chromosome partition protein MukB of Escherichia coli (strain 55989 / EAEC).